Reading from the N-terminus, the 403-residue chain is Golgin-45 (403 aa).

Residues 1-63 (MEKMTTLKSS…PRKKVSSDSP (63 aa)) form a disordered region. The Tankyrase-binding motif signature appears at 22 to 26 (RGAGD). Serine 53 bears the Phosphoserine mark. The stretch at 123 to 216 (RKELSEVKKV…QLERMSIQCD (94 aa)) forms a coiled coil. Serine 356 is subject to Phosphoserine. The segment at 397 to 403 (QGELIAL) is essential for interaction with GORASP2.

Interacts with GORASP2. Interacts with the GTP-bound form of RAB2, but not with other Golgi Rab proteins. Identified in a complex with RAB2 and GORASP2. Post-translationally, ADP-ribosylated by tankyrase TNKS and TNKS2. Poly-ADP-ribosylated protein is recognized by RNF146, followed by ubiquitination. In terms of processing, ubiquitinated by RNF146 when poly-ADP-ribosylated, leading to its degradation.

It is found in the golgi apparatus membrane. Functionally, required for normal Golgi structure and for protein transport from the endoplasmic reticulum (ER) through the Golgi apparatus to the cell surface. The polypeptide is Golgin-45 (Blzf1) (Mus musculus (Mouse)).